Consider the following 2701-residue polypeptide: Centromere-associated protein E (2701 aa).

Residues 6 to 329 form the Kinesin motor domain; that stretch reads AVAVCVRVRP…LQFASTAKYM (324 aa). 86–93 serves as a coordination point for ATP; the sequence is GQTASGKT. A coiled-coil region spans residues 336-2590; that stretch reads NEVSTDEALL…SNEVKTWKER (2255 aa). A phosphoserine mark is found at serine 611 and serine 2083. A kinetochore-binding domain region spans residues 2126-2476; it reads KEIEFQKELS…IDLEKMKNAK (351 aa). Residues 2355–2376 are disordered; that stretch reads SGAQVNPTTQDNKNPHVTSRAT. Serine 2389 bears the Phosphoserine mark. Positions 2508-2527 are enriched in polar residues; it reads QAQDTSVISEHTDPQPSNKP. Disordered stretches follow at residues 2508-2533 and 2588-2701; these read QAQD…CGGG and KERT…CKTQ. The interval 2510 to 2698 is globular autoinhibitory domain; the sequence is QDTSVISEHT…ASSGKDVPEC (189 aa). Residues 2588 to 2600 are compositionally biased toward basic and acidic residues; it reads KERTLKREAHKQV. Polar residues predominate over residues 2601–2625; sequence TCENSPKSPKVTGTASKKKQITPSQ. Residues 2626–2640 show a composition bias toward basic and acidic residues; it reads CKERNLQDPVPKESP. Phosphoserine is present on residues serine 2639, serine 2647, and serine 2651. A Cysteine methyl ester modification is found at cysteine 2698. The S-farnesyl cysteine moiety is linked to residue cysteine 2698. Residues 2699–2701 constitute a propeptide, removed in mature form; the sequence is KTQ.

Belongs to the TRAFAC class myosin-kinesin ATPase superfamily. Kinesin family. As to quaternary structure, monomer. Interacts with CENPF. Interacts with BUB1B. Interacts with SEPT7. Interacts with KIF18A. Interacts with PRC1. Interacts with NUF2; this interaction determines kinetochore localization. Interacts with SKAP; this interaction greatly favors SKAP binding to microtubules. Interacts with TRAPPC12. Interacts with CTCF. In terms of processing, the C-terminal inhibitory domain is phosphorylated. Phosphorylation relieves autoinhibition of the kinetochore motor. Sumoylated with SUMO2 and SUMO3. The sumoylation mediates the association to the kinetochore.

Its subcellular location is the chromosome. It localises to the centromere. The protein localises to the kinetochore. It is found in the cytoplasm. The protein resides in the cytoskeleton. Its subcellular location is the spindle. Its function is as follows. Microtubule plus-end-directed kinetochore motor which plays an important role in chromosome congression, microtubule-kinetochore conjugation and spindle assembly checkpoint activation. Drives chromosome congression (alignment of chromosomes at the spindle equator resulting in the formation of the metaphase plate) by mediating the lateral sliding of polar chromosomes along spindle microtubules towards the spindle equator and by aiding the establishment and maintenance of connections between kinetochores and spindle microtubules. The transport of pole-proximal chromosomes towards the spindle equator is favored by microtubule tracks that are detyrosinated. Acts as a processive bi-directional tracker of dynamic microtubule tips; after chromosomes have congressed, continues to play an active role at kinetochores, enhancing their links with dynamic microtubule ends. Suppresses chromosome congression in NDC80-depleted cells and contributes positively to congression only when microtubules are stabilized. Plays an important role in the formation of stable attachments between kinetochores and spindle microtubules The stabilization of kinetochore-microtubule attachment also requires CENPE-dependent localization of other proteins to the kinetochore including BUB1B, MAD1 and MAD2. Plays a role in spindle assembly checkpoint activation (SAC) via its interaction with BUB1B resulting in the activation of its kinase activity, which is important for activating SAC. Necessary for the mitotic checkpoint signal at individual kinetochores to prevent aneuploidy due to single chromosome loss. The chain is Centromere-associated protein E (CENPE) from Homo sapiens (Human).